Here is a 432-residue protein sequence, read N- to C-terminus: Trigger factor (432 aa).

In terms of domain architecture, PPIase FKBP-type spans 161–246 (EDRVTIDFTG…LKKVEERELP (86 aa)).

Belongs to the FKBP-type PPIase family. Tig subfamily. In terms of assembly, homodimer and monomer. In vivo most of the ribosomes are in complex with monomeric TF. Uncomplexed TF, however, is in a monomer-dimer equilibrium with approximately two thirds of TF existing in a dimeric state.

The protein resides in the cytoplasm. It carries out the reaction [protein]-peptidylproline (omega=180) = [protein]-peptidylproline (omega=0). Its function is as follows. Involved in protein export. Acts as a chaperone by maintaining the newly synthesized protein in an open conformation. Functions as a peptidyl-prolyl cis-trans isomerase. This is Trigger factor from Shigella dysenteriae serotype 1 (strain Sd197).